Here is a 257-residue protein sequence, read N- to C-terminus: Transcription factor MYB4 (257 aa).

HTH myb-type domains follow at residues 9 to 61 and 62 to 116; these read KMGL…INYL and RPDI…KKRL. DNA-binding regions (H-T-H motif) lie at residues 37–61 and 89–112; these read WRALPKQAGLLRCGKSCRLRWINYL and WSAIAARLPGRTDNEIKNVWHTHL. Positions 115-179 are disordered; that stretch reads RLDAPAQGGH…VAEEHGNAGI (65 aa). Basic residues predominate over residues 130 to 140; the sequence is GKKHKKPKSAK. Residues 141-170 are compositionally biased toward low complexity; that stretch reads KPAAAAAAPPASPERSASSSVTESSMASSV.

It is found in the nucleus. Its function is as follows. Transcriptional activator involved in cold stress response. Regulates positively the expression of genes involved in reactive oxygen species (ROS) scavenging such as peroxidase and superoxide dismutase during cold stress. Transactivates a complex gene network that have major effects on stress tolerance and panicle development. The protein is Transcription factor MYB4 of Oryza sativa subsp. japonica (Rice).